Consider the following 506-residue polypeptide: Maturase K (506 aa).

It belongs to the intron maturase 2 family. MatK subfamily.

The protein localises to the plastid. It localises to the chloroplast. Usually encoded in the trnK tRNA gene intron. Probably assists in splicing its own and other chloroplast group II introns. The polypeptide is Maturase K (Trifolium subterraneum (Subterranean clover)).